A 1177-amino-acid chain; its full sequence is uncharacterized protein (1177 aa).

An N-terminal signal peptide occupies residues 1–26; sequence MKKLLKKSKFWWFLLCGLSVSTILVA. The N-palmitoyl cysteine moiety is linked to residue Cys-27. A lipid anchor (S-diacylglycerol cysteine) is attached at Cys-27.

Belongs to the MG307/MG309/MG338 family.

The protein localises to the cell membrane. This is an uncharacterized protein from Mycoplasma genitalium (strain ATCC 33530 / DSM 19775 / NCTC 10195 / G37) (Mycoplasmoides genitalium).